We begin with the raw amino-acid sequence, 563 residues long: 4-hydroxy-7-methoxy-3-oxo-3,4-dihydro-2H-1,4-benzoxazin-2-yl glucoside beta-D-glucosidase 2, chloroplastic (563 aa).

The N-terminal 51 residues, methionine 1 to arginine 51, are a transit peptide targeting the chloroplast. Positions leucine 17–arginine 43 are disordered. A beta-D-glucoside is bound by residues glutamine 89, histidine 193, and asparagine 241–glutamate 242. The active-site Proton donor is glutamate 242. A disulfide bridge links cysteine 261 with cysteine 267. Positions serine 322–arginine 358 are dimerization. Residue tyrosine 384 coordinates a beta-D-glucoside. Dimerization regions lie at residues histidine 391–leucine 402 and lysine 447–asparagine 450. A beta-D-glucoside-binding positions include glutamate 457, tryptophan 508, glutamate 515–tryptophan 516, and tyrosine 524. Residue glutamate 457 is the Nucleophile of the active site.

This sequence belongs to the glycosyl hydrolase 1 family. As to quaternary structure, homo- and heterodimer. As to expression, expressed in leaves only starting at day 6 after germination.

It is found in the plastid. The protein localises to the chloroplast. It carries out the reaction Hydrolysis of terminal, non-reducing beta-D-glucosyl residues with release of beta-D-glucose.. The enzyme catalyses DIMBOA beta-D-glucoside + H2O = DIMBOA + D-glucose. It catalyses the reaction DIBOA beta-D-glucoside + H2O = DIBOA + D-glucose. Beta-glucosidase acting poorly on artificial aryl beta-glucosides. Has no activity toward the chromogenic substrate 6-bromo-2-naphthyl-beta-D-glucoside (6BNGlc). This is 4-hydroxy-7-methoxy-3-oxo-3,4-dihydro-2H-1,4-benzoxazin-2-yl glucoside beta-D-glucosidase 2, chloroplastic (GLU2) from Zea mays (Maize).